We begin with the raw amino-acid sequence, 431 residues long: 3-isopropylmalate dehydratase large subunit (431 aa).

[4Fe-4S] cluster contacts are provided by cysteine 300, cysteine 360, and cysteine 363.

It belongs to the aconitase/IPM isomerase family. LeuC type 2 subfamily. As to quaternary structure, heterodimer of LeuC and LeuD. It depends on [4Fe-4S] cluster as a cofactor.

The enzyme catalyses (2R,3S)-3-isopropylmalate = (2S)-2-isopropylmalate. It participates in amino-acid biosynthesis; L-leucine biosynthesis; L-leucine from 3-methyl-2-oxobutanoate: step 2/4. Functionally, catalyzes the isomerization between 2-isopropylmalate and 3-isopropylmalate, via the formation of 2-isopropylmaleate. The protein is 3-isopropylmalate dehydratase large subunit of Sulfurihydrogenibium sp. (strain YO3AOP1).